The primary structure comprises 627 residues: (+)-sabinene synthase, chloroplastic (627 aa).

The N-terminal 46 residues, Met-1–Met-46, are a transit peptide targeting the chloroplast. Positions 378, 382, and 530 each coordinate Mg(2+). A DDXXD motif motif is present at residues Asp-378 to Asp-382.

This sequence belongs to the terpene synthase family. Tpsd subfamily. As to quaternary structure, monomer. Requires Mg(2+) as cofactor.

It is found in the plastid. Its subcellular location is the chloroplast. The enzyme catalyses (2E)-geranyl diphosphate = (1R,5R)-sabinene + diphosphate. Its pathway is terpene metabolism; oleoresin biosynthesis. Terpene synthase (TPS) involved in defensive oleoresin formation in conifers in response to insect attack (e.g. white pine weevil P.strobi) or other injury. Produces (+)-sabinene from geranyl diphosphate, but has no activity with geranylgeranyl diphosphate or farnesyl diphosphate. This Picea sitchensis (Sitka spruce) protein is (+)-sabinene synthase, chloroplastic (TPS-sab).